Reading from the N-terminus, the 250-residue chain is Triosephosphate isomerase (250 aa).

9–11 lines the substrate pocket; that stretch reads NWK. The active-site Electrophile is the histidine 100. The active-site Proton acceptor is glutamate 169. Substrate contacts are provided by residues glycine 175, serine 208, and 229 to 230; that span reads GG.

The protein belongs to the triosephosphate isomerase family. Homodimer.

The protein localises to the cytoplasm. It catalyses the reaction D-glyceraldehyde 3-phosphate = dihydroxyacetone phosphate. Its pathway is carbohydrate biosynthesis; gluconeogenesis. It participates in carbohydrate degradation; glycolysis; D-glyceraldehyde 3-phosphate from glycerone phosphate: step 1/1. Functionally, involved in the gluconeogenesis. Catalyzes stereospecifically the conversion of dihydroxyacetone phosphate (DHAP) to D-glyceraldehyde-3-phosphate (G3P). This is Triosephosphate isomerase from Synechococcus sp. (strain JA-2-3B'a(2-13)) (Cyanobacteria bacterium Yellowstone B-Prime).